The primary structure comprises 198 residues: Endonuclease V (198 aa).

Asp-38 and Asp-101 together coordinate Mg(2+).

The protein belongs to the endonuclease V family. The cofactor is Mg(2+).

The protein resides in the cytoplasm. The catalysed reaction is Endonucleolytic cleavage at apurinic or apyrimidinic sites to products with a 5'-phosphate.. In terms of biological role, DNA repair enzyme involved in the repair of deaminated bases. Selectively cleaves double-stranded DNA at the second phosphodiester bond 3' to a deoxyinosine leaving behind the intact lesion on the nicked DNA. This Saccharolobus islandicus (strain M.16.4 / Kamchatka #3) (Sulfolobus islandicus) protein is Endonuclease V.